A 454-amino-acid chain; its full sequence is CBL-interacting protein kinase 4 (454 aa).

The region spanning tyrosine 25–phenylalanine 284 is the Protein kinase domain. Residues leucine 31–valine 39 and lysine 54 contribute to the ATP site. The Proton acceptor role is filled by aspartate 151. The tract at residues aspartate 169 to glutamate 198 is activation loop. The 25-residue stretch at alanine 311–glycine 335 folds into the NAF domain. A PPI region spans residues leucine 341–valine 370.

The protein belongs to the protein kinase superfamily. CAMK Ser/Thr protein kinase family. SNF1 subfamily. It depends on Mn(2+) as a cofactor.

The catalysed reaction is L-seryl-[protein] + ATP = O-phospho-L-seryl-[protein] + ADP + H(+). It catalyses the reaction L-threonyl-[protein] + ATP = O-phospho-L-threonyl-[protein] + ADP + H(+). Its function is as follows. CIPK serine-threonine protein kinases interact with CBL proteins. Binding of a CBL protein to the regulatory NAF domain of CIPK protein lead to the activation of the kinase in a calcium-dependent manner. In Oryza sativa subsp. japonica (Rice), this protein is CBL-interacting protein kinase 4 (CIPK4).